Consider the following 229-residue polypeptide: Germin-like protein subfamily 1 member 7 (229 aa).

Residues 1–24 form the signal peptide; the sequence is MEGFLRFLVAKAILLALASSFVSC. Residues cysteine 34 and cysteine 50 are joined by a disulfide bond. The Cupin type-1 domain occupies 64–215; sequence SGLNIAGNTI…AFQLDVNVVK (152 aa). Asparagine 79 is a glycosylation site (N-linked (GlcNAc...) asparagine). 4 residues coordinate Mn(2+): histidine 112, histidine 114, glutamate 119, and histidine 161.

It belongs to the germin family. As to quaternary structure, oligomer (believed to be a pentamer but probably hexamer).

The protein resides in the secreted. Its subcellular location is the extracellular space. It is found in the apoplast. In terms of biological role, may play a role in plant defense. Probably has no oxalate oxidase activity even if the active site is conserved. This Arabidopsis thaliana (Mouse-ear cress) protein is Germin-like protein subfamily 1 member 7.